A 353-amino-acid chain; its full sequence is Methionine import ATP-binding protein MetN (353 aa).

In terms of domain architecture, ABC transporter spans 11-251 (ITFDRVEKSF…PEHPTTRSFL (241 aa)). 48–55 (GRSGAGKS) is an ATP binding site.

The protein belongs to the ABC transporter superfamily. Methionine importer (TC 3.A.1.24) family. In terms of assembly, the complex is composed of two ATP-binding proteins (MetN), two transmembrane proteins (MetI) and a solute-binding protein (MetQ).

It localises to the cell inner membrane. The catalysed reaction is L-methionine(out) + ATP + H2O = L-methionine(in) + ADP + phosphate + H(+). The enzyme catalyses D-methionine(out) + ATP + H2O = D-methionine(in) + ADP + phosphate + H(+). Part of the ABC transporter complex MetNIQ involved in methionine import. Responsible for energy coupling to the transport system. The protein is Methionine import ATP-binding protein MetN of Cereibacter sphaeroides (strain ATCC 17023 / DSM 158 / JCM 6121 / CCUG 31486 / LMG 2827 / NBRC 12203 / NCIMB 8253 / ATH 2.4.1.) (Rhodobacter sphaeroides).